The primary structure comprises 435 residues: ATP-dependent protease ATPase subunit HslU (435 aa).

ATP is bound by residues Ile18, 60–65 (GVGKTE), Asp248, Glu313, and Arg385.

The protein belongs to the ClpX chaperone family. HslU subfamily. A double ring-shaped homohexamer of HslV is capped on each side by a ring-shaped HslU homohexamer. The assembly of the HslU/HslV complex is dependent on binding of ATP.

Its subcellular location is the cytoplasm. ATPase subunit of a proteasome-like degradation complex; this subunit has chaperone activity. The binding of ATP and its subsequent hydrolysis by HslU are essential for unfolding of protein substrates subsequently hydrolyzed by HslV. HslU recognizes the N-terminal part of its protein substrates and unfolds these before they are guided to HslV for hydrolysis. In Sinorhizobium medicae (strain WSM419) (Ensifer medicae), this protein is ATP-dependent protease ATPase subunit HslU.